The sequence spans 142 residues: UPF0275 protein PM0505 (142 aa).

This sequence belongs to the UPF0275 family.

The sequence is that of UPF0275 protein PM0505 from Pasteurella multocida (strain Pm70).